Reading from the N-terminus, the 233-residue chain is Small ribosomal subunit protein uS2 (233 aa).

It belongs to the universal ribosomal protein uS2 family.

The sequence is that of Small ribosomal subunit protein uS2 from Clostridium perfringens (strain ATCC 13124 / DSM 756 / JCM 1290 / NCIMB 6125 / NCTC 8237 / Type A).